Consider the following 207-residue polypeptide: Superoxide dismutase [Mn] (207 aa).

Mn(2+) is bound by residues His-28, His-76, Asp-160, and His-164.

The protein belongs to the iron/manganese superoxide dismutase family. Mn(2+) is required as a cofactor.

It catalyses the reaction 2 superoxide + 2 H(+) = H2O2 + O2. Its function is as follows. Destroys superoxide anion radicals which are normally produced within the cells and which are toxic to biological systems. The polypeptide is Superoxide dismutase [Mn] (sodA) (Nocardia asteroides).